The following is a 600-amino-acid chain: Adenine deaminase 3 (600 aa).

Belongs to the metallo-dependent hydrolases superfamily. Adenine deaminase family. It depends on Mn(2+) as a cofactor.

It carries out the reaction adenine + H2O + H(+) = hypoxanthine + NH4(+). The chain is Adenine deaminase 3 from Rhizobium johnstonii (strain DSM 114642 / LMG 32736 / 3841) (Rhizobium leguminosarum bv. viciae).